We begin with the raw amino-acid sequence, 487 residues long: Transmembrane protein 161B (487 aa).

Residue Asn34 is glycosylated (N-linked (GlcNAc...) asparagine). The helical transmembrane segment at Leu107–Phe127 threads the bilayer. Asn135 carries N-linked (GlcNAc...) asparagine glycosylation. Helical transmembrane passes span Ile136 to Thr156 and Ser169 to Thr189. Asn203 carries an N-linked (GlcNAc...) asparagine glycan. 5 consecutive transmembrane segments (helical) span residues Phe228–Leu248, Ile265–Val285, Leu305–Leu325, Val367–His387, and Leu459–Phe479.

This sequence belongs to the TMEM161 family.

Its subcellular location is the cell membrane. Essential for maintaining normal cardiac rhythm in the developing heart and for neonatal survival. Inhibits potassium and calcium currents in the cardiomyocytes, this assists in timely action potential repolarization and thereby maintains normal cardiac rhythm. The chain is Transmembrane protein 161B (TMEM161B) from Homo sapiens (Human).